Consider the following 487-residue polypeptide: Malonate-semialdehyde dehydrogenase (487 aa).

NAD(+) contacts are provided by Ala-150, Phe-152, Lys-176, Glu-179, Arg-180, Ser-229, and Thr-251. Cys-284 functions as the Nucleophile in the catalytic mechanism. Position 382 (Glu-382) interacts with NAD(+).

This sequence belongs to the aldehyde dehydrogenase family. IolA subfamily. As to quaternary structure, homotetramer.

It carries out the reaction 3-oxopropanoate + NAD(+) + CoA + H2O = hydrogencarbonate + acetyl-CoA + NADH + H(+). The enzyme catalyses 2-methyl-3-oxopropanoate + NAD(+) + CoA + H2O = propanoyl-CoA + hydrogencarbonate + NADH + H(+). Its pathway is polyol metabolism; myo-inositol degradation into acetyl-CoA; acetyl-CoA from myo-inositol: step 7/7. Functionally, catalyzes the oxidation of malonate semialdehyde (MSA) and methylmalonate semialdehyde (MMSA) into acetyl-CoA and propanoyl-CoA, respectively. Is involved in a myo-inositol catabolic pathway. Bicarbonate, and not CO2, is the end-product of the enzymatic reaction. The polypeptide is Malonate-semialdehyde dehydrogenase (Bacillus velezensis (strain DSM 23117 / BGSC 10A6 / LMG 26770 / FZB42) (Bacillus amyloliquefaciens subsp. plantarum)).